We begin with the raw amino-acid sequence, 517 residues long: Acetylcholine receptor subunit delta (517 aa).

The first 21 residues, 1 to 21 (MAGPVPTLGLLAALVVCGSWG), serve as a signal peptide directing secretion. The Extracellular segment spans residues 22 to 245 (LNEEQRLIQH…VTFYLIIRRK (224 aa)). N-linked (GlcNAc...) asparagine glycosylation is found at N97, N164, and N190. C151 and C165 are oxidised to a cystine. Helical transmembrane passes span 246–270 (PLFY…VFYL), 278–296 (TSVA…LLIS), and 312–333 (FLLF…VLNI). Over 334–471 (HFRTPSTHVL…WNQVARTVDR (138 aa)) the chain is Cytoplasmic. Position 390 is a phosphotyrosine; by Tyr-kinases (Y390). A helical transmembrane segment spans residues 472–490 (LCLFVVTPVMVVGTAWIFL).

The protein belongs to the ligand-gated ion channel (TC 1.A.9) family. Acetylcholine receptor (TC 1.A.9.1) subfamily. Delta/CHRND sub-subfamily. As to quaternary structure, pentamer of two alpha chains, and one each of the beta, delta, and gamma (in immature muscle) or epsilon (in mature muscle) chains. The muscle heteropentamer composed of alpha-1, beta-1, delta, epsilon subunits interacts with the alpha-conotoxin ImII.

The protein resides in the postsynaptic cell membrane. It localises to the cell membrane. It catalyses the reaction K(+)(in) = K(+)(out). It carries out the reaction Na(+)(in) = Na(+)(out). After binding acetylcholine, the AChR responds by an extensive change in conformation that affects all subunits and leads to opening of an ion-conducting channel across the plasma membrane. The protein is Acetylcholine receptor subunit delta (Chrnd) of Rattus norvegicus (Rat).